The sequence spans 425 residues: Light-independent protochlorophyllide reductase subunit N (425 aa).

Cysteine 17, cysteine 42, and cysteine 103 together coordinate [4Fe-4S] cluster.

The protein belongs to the BchN/ChlN family. In terms of assembly, protochlorophyllide reductase is composed of three subunits; ChlL, ChlN and ChlB. Forms a heterotetramer of two ChlB and two ChlN subunits. The cofactor is [4Fe-4S] cluster.

The enzyme catalyses chlorophyllide a + oxidized 2[4Fe-4S]-[ferredoxin] + 2 ADP + 2 phosphate = protochlorophyllide a + reduced 2[4Fe-4S]-[ferredoxin] + 2 ATP + 2 H2O. It functions in the pathway porphyrin-containing compound metabolism; chlorophyll biosynthesis (light-independent). Its function is as follows. Component of the dark-operative protochlorophyllide reductase (DPOR) that uses Mg-ATP and reduced ferredoxin to reduce ring D of protochlorophyllide (Pchlide) to form chlorophyllide a (Chlide). This reaction is light-independent. The NB-protein (ChlN-ChlB) is the catalytic component of the complex. In Synechococcus sp. (strain CC9605), this protein is Light-independent protochlorophyllide reductase subunit N.